We begin with the raw amino-acid sequence, 504 residues long: MAGKLGKFQMLGFQHWKGLTSDNHLGAIFQQAPQKATNLMVQLLAFYRGKSLDTFLNSFPTREFEDDNEYYWDVIGSSRRNIPLVEARDENGVVVAANAANVGVGTSPFYLVFPEDWFADGEVIVGNLNQVYPFRILGDARMEGTNAVYKVELMGGNTQGVPAERLQQGERFSIEFAPVEKELSRKVGDVRFTSPVSMRNEWTTIRIQHKVAGNKLNKKLAMGIPMVRNLESGKQVKDTANMWMHYVDWEVELQFDEYKNNAMAWGTSNRNLNGEYMNFGKSGNAIKTGAGIFEQTEVANTMYYNTFSLKLLEDALYELSASKLAMDDRLFVIKTGERGAIQFHKEVLKTVSGWTTFVLDNNSTRVVEKVQSRLHSNALSAGFQFVEYKAPNGVRVRLDVDPFYDDPVRNKILHPMGGVAFSYRYDIWYIGTMDQPNIFKCKIKGDNEYRGYQWGIRNPFTGQKGNPYMSFDEDSAVIHRMATLGVCVLDPTRTMSLIPAILQG.

In terms of assembly, interacts with the auxiliary capsid protein (via FD region). Interacts with the head fiber dimeric protein. Interacts with the head fiber trimeric protein. Interacts with the portal vertex auxiliary protein.

It is found in the virion. Functionally, capsid protein self-assembles to form an icosahedral capsid, with a T=9 symmetry, about 77 nm in diameter. Each asymmetric capsid nonamer is covered by 9 capsid auxiliary protein, 1 copy of the trimeric head fiber protein and 2 copies of the dimeric head fiber protein. The polypeptide is Major capsid protein (Bacteroides intestinalis (Bacteroides phage PhiCrAss001)).